Consider the following 688-residue polypeptide: MAKIRVYELAKELNISSKELITLLEEEFSVEVKNHMSAIEDEDADLIKELLSGKEKSEKTKEEDDEIETTAKNPIKESINNKKSNKRDDKKEKVNTENAEDMGIITMTSDTITVKEISDKLEKSYAEVIKELMLMGVMASVNQEINFEMAEKLAAKFDMEILKEDEDEEEDLEDILKDNEEEEHLQKRSPIITVMGHVDHGKTSLLDAIRKSKVTSTEAGGITQHIGAYTVELNGEAITFLDTPGHAAFTAMRARGAQVTDIVILVVAADDGIMPQTQEAISHCKAANVPLIVAINKIDRPGANIDKVKQELTEYGLVAEDWGGDTICVPVSAHTKEGIDDLLEMILLSSEILELKANPNRKAKGTVVEAKLDKGRGAVATLLIQNGTLRVGDSIVVGSTYGRIRAMFNDKGRNIKSAGPSTPVEILGLSEVPEAGDKFYQVKDEKTARGIADKRKEKIRDEYLQSTHKVSLEDLYNQIQEGTVKELGLIVKADVQGSVEALKQSLEKLSTEEVKVRVIHGGVGAINETDVTLATASNGIILGFNVRPDNNAIIASERDGVDIKTYRVIYDAIEDIKSAMLGMLEPEFKEVVIGTAEVRQVYKISSVGTIAGAYVQTGKLARNAGARVIRDGIVIFESELASLKRFKDDAKEVAQGYECGLSIEKFNDIKEGDIIECFIMEEIKKKTL.

Residues Leu-50–Glu-62 show a composition bias toward basic and acidic residues. The interval Leu-50–Asn-95 is disordered. The segment covering Lys-72–Lys-82 has biased composition (low complexity). A compositionally biased stretch (basic and acidic residues) spans Lys-86–Asn-95. One can recognise a tr-type G domain in the interval Lys-187 to Glu-354. Residues Gly-196–Thr-203 are G1. GTP is bound at residue Gly-196–Thr-203. The segment at Gly-221 to His-225 is G2. The tract at residues Asp-242–Gly-245 is G3. GTP contacts are provided by residues Asp-242–His-246 and Asn-296–Asp-299. The segment at Asn-296–Asp-299 is G4. Positions Ser-332–His-334 are G5.

Belongs to the TRAFAC class translation factor GTPase superfamily. Classic translation factor GTPase family. IF-2 subfamily.

The protein localises to the cytoplasm. In terms of biological role, one of the essential components for the initiation of protein synthesis. Protects formylmethionyl-tRNA from spontaneous hydrolysis and promotes its binding to the 30S ribosomal subunits. Also involved in the hydrolysis of GTP during the formation of the 70S ribosomal complex. In Clostridium botulinum (strain 657 / Type Ba4), this protein is Translation initiation factor IF-2.